A 218-amino-acid chain; its full sequence is Holliday junction branch migration complex subunit RuvA (218 aa).

A domain I region spans residues 1-64; it reads MIGKITGRLE…EDVMQLFGFT (64 aa). The domain II stretch occupies residues 65-143; that stretch reads TLTEKEWHRL…SVMGMSDTQA (79 aa). The tract at residues 144–164 is flexible linker; the sequence is TVAAQSSDAVIETRAAPSPVV. Positions 165-218 are domain III; it reads QNPSAQAEALSALSNLGYAPGDAAAAVAQAAGELPDAETPDLIRAALKRLAPKG.

Belongs to the RuvA family. Homotetramer. Forms an RuvA(8)-RuvB(12)-Holliday junction (HJ) complex. HJ DNA is sandwiched between 2 RuvA tetramers; dsDNA enters through RuvA and exits via RuvB. An RuvB hexamer assembles on each DNA strand where it exits the tetramer. Each RuvB hexamer is contacted by two RuvA subunits (via domain III) on 2 adjacent RuvB subunits; this complex drives branch migration. In the full resolvosome a probable DNA-RuvA(4)-RuvB(12)-RuvC(2) complex forms which resolves the HJ.

Its subcellular location is the cytoplasm. In terms of biological role, the RuvA-RuvB-RuvC complex processes Holliday junction (HJ) DNA during genetic recombination and DNA repair, while the RuvA-RuvB complex plays an important role in the rescue of blocked DNA replication forks via replication fork reversal (RFR). RuvA specifically binds to HJ cruciform DNA, conferring on it an open structure. The RuvB hexamer acts as an ATP-dependent pump, pulling dsDNA into and through the RuvAB complex. HJ branch migration allows RuvC to scan DNA until it finds its consensus sequence, where it cleaves and resolves the cruciform DNA. In Roseobacter denitrificans (strain ATCC 33942 / OCh 114) (Erythrobacter sp. (strain OCh 114)), this protein is Holliday junction branch migration complex subunit RuvA.